Consider the following 236-residue polypeptide: Aquaporin Z (236 aa).

The next 2 membrane-spanning stretches (helical) occupy residues 12–32 (FFGTFWLVLGGCGSAVLAAGV) and 37–57 (IGYAGVALAFGLTVLTMAYAV). The NPA 1 signature appears at 66 to 68 (NPA). 3 helical membrane-spanning segments follow: residues 92–112 (VVGAIVAAATLASIAQGVAGF), 136–156 (AALICEIVLSAGFVFVILGAT), and 163–183 (GFAPIPIGLALTLIHLISIPV). Residues 189 to 191 (NPA) carry the NPA 2 motif. Residues 197–217 (ALFVGGWALEQLWLFWLAPIA) traverse the membrane as a helical segment.

The protein belongs to the MIP/aquaporin (TC 1.A.8) family. As to quaternary structure, homotetramer.

The protein localises to the cell inner membrane. It carries out the reaction H2O(in) = H2O(out). In terms of biological role, channel that permits osmotically driven movement of water in both directions. It is involved in the osmoregulation and in the maintenance of cell turgor during volume expansion in rapidly growing cells. It mediates rapid entry or exit of water in response to abrupt changes in osmolarity. This chain is Aquaporin Z, found in Bordetella bronchiseptica (strain ATCC BAA-588 / NCTC 13252 / RB50) (Alcaligenes bronchisepticus).